Here is a 226-residue protein sequence, read N- to C-terminus: Chalcone--flavanone isomerase (226 aa).

Residues threonine 47, asparagine 112, and serine 189 each coordinate substrate.

The protein belongs to the chalcone isomerase family.

It catalyses the reaction a chalcone = a flavanone.. Its pathway is secondary metabolite biosynthesis; flavonoid biosynthesis. In terms of biological role, catalyzes the intramolecular cyclization of bicyclic chalcones into tricyclic (S)-flavanones. Responsible for the isomerization of 4,2',4',6'-tetrahydroxychalcone (also termed chalcone) into naringenin. In Allium cepa (Onion), this protein is Chalcone--flavanone isomerase (CHI).